A 149-amino-acid chain; its full sequence is Nucleoside diphosphate kinase (149 aa).

ATP is bound by residues Lys-9, Phe-57, Arg-85, Thr-91, Arg-102, and Asn-112. Residue His-115 is the Pros-phosphohistidine intermediate of the active site.

The protein belongs to the NDK family. Homotetramer. It depends on Mg(2+) as a cofactor.

The protein resides in the cytoplasm. The enzyme catalyses a 2'-deoxyribonucleoside 5'-diphosphate + ATP = a 2'-deoxyribonucleoside 5'-triphosphate + ADP. The catalysed reaction is a ribonucleoside 5'-diphosphate + ATP = a ribonucleoside 5'-triphosphate + ADP. Functionally, major role in the synthesis of nucleoside triphosphates other than ATP. The ATP gamma phosphate is transferred to the NDP beta phosphate via a ping-pong mechanism, using a phosphorylated active-site intermediate. The sequence is that of Nucleoside diphosphate kinase from Desulfitobacterium hafniense (strain DSM 10664 / DCB-2).